The sequence spans 253 residues: ATP synthase subunit b 1 (253 aa).

Residues 5 to 27 (GWTVALQAVNFLILVLLLRHFLY) form a helical membrane-spanning segment.

The protein belongs to the ATPase B chain family. As to quaternary structure, F-type ATPases have 2 components, F(1) - the catalytic core - and F(0) - the membrane proton channel. F(1) has five subunits: alpha(3), beta(3), gamma(1), delta(1), epsilon(1). F(0) has three main subunits: a(1), b(2) and c(10-14). The alpha and beta chains form an alternating ring which encloses part of the gamma chain. F(1) is attached to F(0) by a central stalk formed by the gamma and epsilon chains, while a peripheral stalk is formed by the delta and b chains.

It localises to the cell inner membrane. F(1)F(0) ATP synthase produces ATP from ADP in the presence of a proton or sodium gradient. F-type ATPases consist of two structural domains, F(1) containing the extramembraneous catalytic core and F(0) containing the membrane proton channel, linked together by a central stalk and a peripheral stalk. During catalysis, ATP synthesis in the catalytic domain of F(1) is coupled via a rotary mechanism of the central stalk subunits to proton translocation. Functionally, component of the F(0) channel, it forms part of the peripheral stalk, linking F(1) to F(0). This is ATP synthase subunit b 1 from Rhodospirillum centenum (strain ATCC 51521 / SW).